The chain runs to 183 residues: Transcription termination/antitermination protein NusG (183 aa).

The KOW domain maps to 131–161 (PGEEVRVTEGPFADFNGTVEEVDYEKGRLKV).

Belongs to the NusG family.

Participates in transcription elongation, termination and antitermination. This is Transcription termination/antitermination protein NusG from Pasteurella multocida (strain Pm70).